The following is a 427-amino-acid chain: Glutamate-1-semialdehyde 2,1-aminomutase (427 aa).

An N6-(pyridoxal phosphate)lysine modification is found at Lys-267.

This sequence belongs to the class-III pyridoxal-phosphate-dependent aminotransferase family. HemL subfamily. In terms of assembly, homodimer. The cofactor is pyridoxal 5'-phosphate.

The protein resides in the cytoplasm. It carries out the reaction (S)-4-amino-5-oxopentanoate = 5-aminolevulinate. It participates in porphyrin-containing compound metabolism; protoporphyrin-IX biosynthesis; 5-aminolevulinate from L-glutamyl-tRNA(Glu): step 2/2. In Geotalea daltonii (strain DSM 22248 / JCM 15807 / FRC-32) (Geobacter daltonii), this protein is Glutamate-1-semialdehyde 2,1-aminomutase.